Consider the following 62-residue polypeptide: MIIAIQLLVLLLITLSTILVVGVPVVLASPGQWEQSKGLIYTGAGLWTGLVIVTSLVNSLVV.

2 helical membrane passes run 8-28 and 41-61; these read LVLLLITLSTILVVGVPVVLA and YTGAGLWTGLVIVTSLVNSLV.

It belongs to the PsbZ family. In terms of assembly, PSII is composed of 1 copy each of membrane proteins PsbA, PsbB, PsbC, PsbD, PsbE, PsbF, PsbH, PsbI, PsbJ, PsbK, PsbL, PsbM, PsbT, PsbX, PsbY, PsbZ, Psb30/Ycf12, at least 3 peripheral proteins of the oxygen-evolving complex and a large number of cofactors. It forms dimeric complexes.

The protein localises to the plastid. It localises to the chloroplast thylakoid membrane. May control the interaction of photosystem II (PSII) cores with the light-harvesting antenna, regulates electron flow through the 2 photosystem reaction centers. PSII is a light-driven water plastoquinone oxidoreductase, using light energy to abstract electrons from H(2)O, generating a proton gradient subsequently used for ATP formation. This Porphyra purpurea (Red seaweed) protein is Photosystem II reaction center protein Z.